Here is a 58-residue protein sequence, read N- to C-terminus: Large ribosomal subunit protein bL32 (58 aa).

A compositionally biased stretch (basic residues) spans 1–19; it reads MAVPKKRTSKSKKNMRKAN. Residues 1-58 form a disordered region; that stretch reads MAVPKKRTSKSKKNMRKANWKNQAKLAAKKALSLGKSVETQRSHSFVHPRYEEEEEED. The span at 20 to 32 shows a compositional bias: low complexity; sequence WKNQAKLAAKKAL.

It belongs to the bacterial ribosomal protein bL32 family.

This is Large ribosomal subunit protein bL32 from Trichodesmium erythraeum (strain IMS101).